Reading from the N-terminus, the 78-residue chain is Large ribosomal subunit protein bL28 (78 aa).

The tract at residues M1–H20 is disordered.

It belongs to the bacterial ribosomal protein bL28 family.

The sequence is that of Large ribosomal subunit protein bL28 from Vibrio parahaemolyticus serotype O3:K6 (strain RIMD 2210633).